A 239-amino-acid polypeptide reads, in one-letter code: Peptidase E (239 aa).

Residues Ser-122, Asp-137, and His-159 each act as charge relay system in the active site.

Belongs to the peptidase S51 family.

Its subcellular location is the cytoplasm. The enzyme catalyses Dipeptidase E catalyzes the hydrolysis of dipeptides Asp-|-Xaa. It does not act on peptides with N-terminal Glu, Asn or Gln, nor does it cleave isoaspartyl peptides.. Its function is as follows. Hydrolyzes dipeptides containing N-terminal aspartate residues. May play a role in allowing the cell to use peptide aspartate to spare carbon otherwise required for the synthesis of the aspartate family of amino acids. This chain is Peptidase E, found in Shewanella baltica (strain OS195).